The primary structure comprises 333 residues: MPLGLGRRKKAPPLVENEEAEPGRGGLGVGEPGPLGGGGSGGPQMGLPPPPPALRPRLVFHTQLAHGSPTGRIEGFTNVKELYGKIAEAFRLPTAEVMFCTLNTHKVDMDKLLGGQIGLEDFIFAHVKGQRKEVEVFKSEDALGLTITDNGAGYAFIKRIKEGSVIDHIHLISVGDMIEAINGQSLLGCRHYEVARLLKELPRGRTFTLKLTEPRKAFDMISQRSAGGRPGSGPQLGTGRGTLRLRSRGPATVEDLPSAFEEKAIEKVDDLLESYMGIRDTELAATMVELGKDKRNPDELAEALDERLGDFAFPDEFVFDVWGAIGDAKVGRY.

Positions 1–11 are enriched in basic residues; the sequence is MPLGLGRRKKA. Positions 1-54 are disordered; that stretch reads MPLGLGRRKKAPPLVENEEAEPGRGGLGVGEPGPLGGGGSGGPQMGLPPPPPAL. The segment covering 23–44 has biased composition (gly residues); it reads GRGGLGVGEPGPLGGGGSGGPQ. The residue at position 68 (S68) is a Phosphoserine. In terms of domain architecture, PDZ spans 133 to 213; sequence EVEVFKSEDA…GRTFTLKLTE (81 aa). Phosphoserine is present on residues S222, S225, and S232. A disordered region spans residues 223-244; it reads QRSAGGRPGSGPQLGTGRGTLR. A compositionally biased stretch (gly residues) spans 228-240; that stretch reads GRPGSGPQLGTGR. Position 242 is a phosphothreonine (T242). S247 is modified (phosphoserine).

Belongs to the GIPC family. As to quaternary structure, interacts with GLUT1 (C-terminus), ACTN1, KIF1B, MYO6, PLEKHG5, SDC4/syndecan-4 and SEMA4C/semaphorin-4C. Interacts with RGS19 C-terminus. Interacts with HTLV-I Tax through the PDZ domain. Widely expressed. Expressed in skeletal muscle (at protein level).

The protein resides in the cytoplasm. It localises to the membrane. Its function is as follows. May be involved in G protein-linked signaling. This is PDZ domain-containing protein GIPC1 (GIPC1) from Homo sapiens (Human).